Consider the following 409-residue polypeptide: UDP-N-acetylglucosamine--N-acetylmuramyl-(pentapeptide) pyrophosphoryl-undecaprenol N-acetylglucosamine transferase (409 aa).

UDP-N-acetyl-alpha-D-glucosamine is bound by residues 11-13 (TGG), Asn-125, Arg-169, Ser-199, and Gln-299.

It belongs to the glycosyltransferase 28 family. MurG subfamily.

It localises to the cell membrane. The catalysed reaction is di-trans,octa-cis-undecaprenyl diphospho-N-acetyl-alpha-D-muramoyl-L-alanyl-D-glutamyl-meso-2,6-diaminopimeloyl-D-alanyl-D-alanine + UDP-N-acetyl-alpha-D-glucosamine = di-trans,octa-cis-undecaprenyl diphospho-[N-acetyl-alpha-D-glucosaminyl-(1-&gt;4)]-N-acetyl-alpha-D-muramoyl-L-alanyl-D-glutamyl-meso-2,6-diaminopimeloyl-D-alanyl-D-alanine + UDP + H(+). It functions in the pathway cell wall biogenesis; peptidoglycan biosynthesis. Its function is as follows. Cell wall formation. Catalyzes the transfer of a GlcNAc subunit on undecaprenyl-pyrophosphoryl-MurNAc-pentapeptide (lipid intermediate I) to form undecaprenyl-pyrophosphoryl-MurNAc-(pentapeptide)GlcNAc (lipid intermediate II). The chain is UDP-N-acetylglucosamine--N-acetylmuramyl-(pentapeptide) pyrophosphoryl-undecaprenol N-acetylglucosamine transferase from Clostridioides difficile (strain 630) (Peptoclostridium difficile).